Reading from the N-terminus, the 761-residue chain is Phosphoribosylformylglycinamidine synthase subunit PurL (761 aa).

The segment covering 1–13 (MTSRVDTVDNAAS) has biased composition (polar residues). Residues 1–23 (MTSRVDTVDNAASTPDHPQPFAE) are disordered. Residue His-57 is part of the active site. Residues Tyr-60 and Lys-104 each contribute to the ATP site. Glu-106 contacts Mg(2+). Substrate contacts are provided by residues 107–110 (SHNH) and Arg-129. Catalysis depends on His-108, which acts as the Proton acceptor. Mg(2+) is bound at residue Asp-130. Position 259 (Gln-259) interacts with substrate. Asp-287 is a binding site for Mg(2+). Residue 331 to 333 (ESQ) coordinates substrate. The ATP site is built by Asn-519 and Gly-556. Residue Asn-557 coordinates Mg(2+). Position 559 (Ser-559) interacts with substrate.

Belongs to the FGAMS family. In terms of assembly, monomer. Part of the FGAM synthase complex composed of 1 PurL, 1 PurQ and 2 PurS subunits.

The protein localises to the cytoplasm. It catalyses the reaction N(2)-formyl-N(1)-(5-phospho-beta-D-ribosyl)glycinamide + L-glutamine + ATP + H2O = 2-formamido-N(1)-(5-O-phospho-beta-D-ribosyl)acetamidine + L-glutamate + ADP + phosphate + H(+). It participates in purine metabolism; IMP biosynthesis via de novo pathway; 5-amino-1-(5-phospho-D-ribosyl)imidazole from N(2)-formyl-N(1)-(5-phospho-D-ribosyl)glycinamide: step 1/2. Part of the phosphoribosylformylglycinamidine synthase complex involved in the purines biosynthetic pathway. Catalyzes the ATP-dependent conversion of formylglycinamide ribonucleotide (FGAR) and glutamine to yield formylglycinamidine ribonucleotide (FGAM) and glutamate. The FGAM synthase complex is composed of three subunits. PurQ produces an ammonia molecule by converting glutamine to glutamate. PurL transfers the ammonia molecule to FGAR to form FGAM in an ATP-dependent manner. PurS interacts with PurQ and PurL and is thought to assist in the transfer of the ammonia molecule from PurQ to PurL. The polypeptide is Phosphoribosylformylglycinamidine synthase subunit PurL (Mycobacteroides abscessus (strain ATCC 19977 / DSM 44196 / CCUG 20993 / CIP 104536 / JCM 13569 / NCTC 13031 / TMC 1543 / L948) (Mycobacterium abscessus)).